The sequence spans 483 residues: ATP synthase subunit beta (483 aa).

Residue 167–174 (GGAGVGKT) coordinates ATP.

This sequence belongs to the ATPase alpha/beta chains family. As to quaternary structure, F-type ATPases have 2 components, CF(1) - the catalytic core - and CF(0) - the membrane proton channel. CF(1) has five subunits: alpha(3), beta(3), gamma(1), delta(1), epsilon(1). CF(0) has three main subunits: a(1), b(2) and c(9-12). The alpha and beta chains form an alternating ring which encloses part of the gamma chain. CF(1) is attached to CF(0) by a central stalk formed by the gamma and epsilon chains, while a peripheral stalk is formed by the delta and b chains.

The protein resides in the cell membrane. It catalyses the reaction ATP + H2O + 4 H(+)(in) = ADP + phosphate + 5 H(+)(out). Functionally, produces ATP from ADP in the presence of a proton gradient across the membrane. The catalytic sites are hosted primarily by the beta subunits. The protein is ATP synthase subunit beta of Paenarthrobacter aurescens (strain TC1).